A 223-amino-acid chain; its full sequence is Small ribosomal subunit protein uS3 (223 aa).

The 69-residue stretch at 38–106 (LKRELKEKLK…EVFIDILEVN (69 aa)) folds into the KH type-2 domain.

The protein belongs to the universal ribosomal protein uS3 family. In terms of assembly, part of the 30S ribosomal subunit. Forms a tight complex with proteins S10 and S14.

Its function is as follows. Binds the lower part of the 30S subunit head. Binds mRNA in the 70S ribosome, positioning it for translation. This is Small ribosomal subunit protein uS3 from Acidobacterium capsulatum (strain ATCC 51196 / DSM 11244 / BCRC 80197 / JCM 7670 / NBRC 15755 / NCIMB 13165 / 161).